Consider the following 270-residue polypeptide: Acetyl-coenzyme A carboxylase carboxyl transferase subunit beta (270 aa).

The 255-residue stretch at 16–270 folds into the CoA carboxyltransferase N-terminal domain; the sequence is LFAKCPACKH…KLLAFHGGSK (255 aa). Residues Cys20, Cys23, Cys38, and Cys41 each coordinate Zn(2+). The C4-type zinc-finger motif lies at 20–41; it reads CPACKHMIYQKDLGLEKICPKC.

Belongs to the AccD/PCCB family. In terms of assembly, acetyl-CoA carboxylase is a heterohexamer composed of biotin carboxyl carrier protein (AccB), biotin carboxylase (AccC) and two subunits each of ACCase subunit alpha (AccA) and ACCase subunit beta (AccD). It depends on Zn(2+) as a cofactor.

The protein localises to the cytoplasm. It catalyses the reaction N(6)-carboxybiotinyl-L-lysyl-[protein] + acetyl-CoA = N(6)-biotinyl-L-lysyl-[protein] + malonyl-CoA. Its pathway is lipid metabolism; malonyl-CoA biosynthesis; malonyl-CoA from acetyl-CoA: step 1/1. Component of the acetyl coenzyme A carboxylase (ACC) complex. Biotin carboxylase (BC) catalyzes the carboxylation of biotin on its carrier protein (BCCP) and then the CO(2) group is transferred by the transcarboxylase to acetyl-CoA to form malonyl-CoA. The polypeptide is Acetyl-coenzyme A carboxylase carboxyl transferase subunit beta (Streptococcus mutans serotype c (strain NN2025)).